A 436-amino-acid chain; its full sequence is MNNIRTIKGGVNLKGKVKVPGDKSISHRALIIGSIANGETTIEGFLHSEDPLSTADCLRKLGVNIPEIKKNEPFTISGLGLDGLKEPKEILNCGNSGTTMRLLMGLLAGQEDKNFILTGDISLNERPMGRVGKPLSLMGGKIFGREKGNKAPISIDGNKLKGCVIGTPVASAQVKSAILLAGLKASGTTSVIEPASSRDHTERMLKAFGADISVRGELGRNVVIKSGGKLIGQRILIPGDISSASFWMIAASIVPNSEVLIQNVGLNPTRTGILNVMDSMGCNYEILDKSTIAGEPIGSIKVKSSNNLKSFTIEGDILPKLIDEIPILTVAACFCNGVSEIKDAQELRVKETDRLKVMARQLQKFGAEVTEKEDGLIINGQSKFNSAEVDSETDHRVAMSLAIASLLAKGTSKIMRADAASVSYPTFWEDLATLTN.

The 3-phosphoshikimate site is built by lysine 23, serine 24, and arginine 28. Lysine 23 contacts phosphoenolpyruvate. Residues glycine 97 and arginine 126 each coordinate phosphoenolpyruvate. 4 residues coordinate 3-phosphoshikimate: serine 171, glutamine 173, aspartate 323, and lysine 350. Phosphoenolpyruvate is bound at residue glutamine 173. The active-site Proton acceptor is the aspartate 323. Phosphoenolpyruvate is bound by residues arginine 354 and arginine 396.

This sequence belongs to the EPSP synthase family. Monomer.

It is found in the cytoplasm. It carries out the reaction 3-phosphoshikimate + phosphoenolpyruvate = 5-O-(1-carboxyvinyl)-3-phosphoshikimate + phosphate. It participates in metabolic intermediate biosynthesis; chorismate biosynthesis; chorismate from D-erythrose 4-phosphate and phosphoenolpyruvate: step 6/7. Catalyzes the transfer of the enolpyruvyl moiety of phosphoenolpyruvate (PEP) to the 5-hydroxyl of shikimate-3-phosphate (S3P) to produce enolpyruvyl shikimate-3-phosphate and inorganic phosphate. This Prochlorococcus marinus (strain AS9601) protein is 3-phosphoshikimate 1-carboxyvinyltransferase.